The chain runs to 83 residues: Translational regulator CsrA (83 aa).

This sequence belongs to the CsrA/RsmA family. Homodimer; the beta-strands of each monomer intercalate to form a hydrophobic core, while the alpha-helices form wings that extend away from the core.

The protein resides in the cytoplasm. Its function is as follows. A translational regulator that binds mRNA to regulate translation initiation and/or mRNA stability. Usually binds in the 5'-UTR at or near the Shine-Dalgarno sequence preventing ribosome-binding, thus repressing translation. Its main target seems to be the major flagellin gene, while its function is anatagonized by FliW. In Thermotoga petrophila (strain ATCC BAA-488 / DSM 13995 / JCM 10881 / RKU-1), this protein is Translational regulator CsrA.